The primary structure comprises 178 residues: Mediator of RNA polymerase II transcription subunit 28 (178 aa).

Residues 1-44 are disordered; that stretch reads MAAPLGGMFSGQPPGPPQAPPGLPGQASLLQAAPGAPRPSSSTL. A compositionally biased stretch (pro residues) spans 13–23; the sequence is PPGPPQAPPGL. Positions 109-145 form a coiled coil; the sequence is QVIKEDVSELRNELQRKDALVQKHLTKLRHWQQVLED.

It belongs to the Mediator complex subunit 28 family. As to quaternary structure, component of the Mediator complex, which is composed of MED1, MED4, MED6, MED7, MED8, MED9, MED10, MED11, MED12, MED13, MED13L, MED14, MED15, MED16, MED17, MED18, MED19, MED20, MED21, MED22, MED23, MED24, MED25, MED26, MED27, MED29, MED30, MED31, CCNC, CDK8 and CDC2L6/CDK11. The MED12, MED13, CCNC and CDK8 subunits form a distinct module termed the CDK8 module. Mediator containing the CDK8 module is less active than Mediator lacking this module in supporting transcriptional activation. Individual preparations of the Mediator complex lacking one or more distinct subunits have been variously termed ARC, CRSP, DRIP, PC2, SMCC and TRAP. Forms a ternary complex with NF2/merlin and GRB2. Binds to actin. As to expression, widely expressed. Highly expressed in vascular tissues such as placenta, testis and liver.

It is found in the nucleus. It localises to the cytoplasm. The protein resides in the membrane. In terms of biological role, component of the Mediator complex, a coactivator involved in the regulated transcription of nearly all RNA polymerase II-dependent genes. Mediator functions as a bridge to convey information from gene-specific regulatory proteins to the basal RNA polymerase II transcription machinery. Mediator is recruited to promoters by direct interactions with regulatory proteins and serves as a scaffold for the assembly of a functional preinitiation complex with RNA polymerase II and the general transcription factors. May be part of a complex containing NF2/merlin that participates in cellular signaling to the actin cytoskeleton downstream of tyrosine kinase signaling pathways. In Homo sapiens (Human), this protein is Mediator of RNA polymerase II transcription subunit 28 (MED28).